Reading from the N-terminus, the 181-residue chain is Protein GrpE (181 aa).

The protein belongs to the GrpE family. In terms of assembly, homodimer.

The protein resides in the cytoplasm. Its function is as follows. Participates actively in the response to hyperosmotic and heat shock by preventing the aggregation of stress-denatured proteins, in association with DnaK and GrpE. It is the nucleotide exchange factor for DnaK and may function as a thermosensor. Unfolded proteins bind initially to DnaJ; upon interaction with the DnaJ-bound protein, DnaK hydrolyzes its bound ATP, resulting in the formation of a stable complex. GrpE releases ADP from DnaK; ATP binding to DnaK triggers the release of the substrate protein, thus completing the reaction cycle. Several rounds of ATP-dependent interactions between DnaJ, DnaK and GrpE are required for fully efficient folding. This Verminephrobacter eiseniae (strain EF01-2) protein is Protein GrpE.